We begin with the raw amino-acid sequence, 378 residues long: D-alanine--D-alanine ligase (378 aa).

The ATP-grasp domain maps to 149–374 (KVLLRAAGIP…FRTVVTDLIE (226 aa)). 189-247 (EAGLQYPLFVKPSRAGSSFGVTKVEQIGDAAALAAAVFEASRHDWRVLVEQGIDAREIE) contacts ATP. Asp328, Glu341, and Asn343 together coordinate Mg(2+).

The protein belongs to the D-alanine--D-alanine ligase family. Mg(2+) is required as a cofactor. It depends on Mn(2+) as a cofactor.

The protein localises to the cytoplasm. It catalyses the reaction 2 D-alanine + ATP = D-alanyl-D-alanine + ADP + phosphate + H(+). Its pathway is cell wall biogenesis; peptidoglycan biosynthesis. In terms of biological role, cell wall formation. The polypeptide is D-alanine--D-alanine ligase (Bifidobacterium animalis subsp. lactis (strain AD011)).